A 529-amino-acid polypeptide reads, in one-letter code: Bifunctional purine biosynthesis protein PurH (529 aa).

In terms of domain architecture, MGS-like spans 1–148 (MQQRRPVRRA…KNHKDVAIVV (148 aa)).

It belongs to the PurH family.

It catalyses the reaction (6R)-10-formyltetrahydrofolate + 5-amino-1-(5-phospho-beta-D-ribosyl)imidazole-4-carboxamide = 5-formamido-1-(5-phospho-D-ribosyl)imidazole-4-carboxamide + (6S)-5,6,7,8-tetrahydrofolate. The catalysed reaction is IMP + H2O = 5-formamido-1-(5-phospho-D-ribosyl)imidazole-4-carboxamide. Its pathway is purine metabolism; IMP biosynthesis via de novo pathway; 5-formamido-1-(5-phospho-D-ribosyl)imidazole-4-carboxamide from 5-amino-1-(5-phospho-D-ribosyl)imidazole-4-carboxamide (10-formyl THF route): step 1/1. It functions in the pathway purine metabolism; IMP biosynthesis via de novo pathway; IMP from 5-formamido-1-(5-phospho-D-ribosyl)imidazole-4-carboxamide: step 1/1. This is Bifunctional purine biosynthesis protein PurH from Salmonella agona (strain SL483).